We begin with the raw amino-acid sequence, 195 residues long: Xanthine phosphoribosyltransferase (195 aa).

2 residues coordinate xanthine: leucine 20 and asparagine 27. A 5-phospho-alpha-D-ribose 1-diphosphate-binding site is contributed by 128–132 (ANGQA). Lysine 156 provides a ligand contact to xanthine.

The protein belongs to the purine/pyrimidine phosphoribosyltransferase family. Xpt subfamily. As to quaternary structure, homodimer.

It localises to the cytoplasm. It catalyses the reaction XMP + diphosphate = xanthine + 5-phospho-alpha-D-ribose 1-diphosphate. The protein operates within purine metabolism; XMP biosynthesis via salvage pathway; XMP from xanthine: step 1/1. In terms of biological role, converts the preformed base xanthine, a product of nucleic acid breakdown, to xanthosine 5'-monophosphate (XMP), so it can be reused for RNA or DNA synthesis. This is Xanthine phosphoribosyltransferase from Limosilactobacillus fermentum (strain NBRC 3956 / LMG 18251) (Lactobacillus fermentum).